A 180-amino-acid chain; its full sequence is Large ribosomal subunit protein eL20 (180 aa).

It belongs to the eukaryotic ribosomal protein eL20 family.

This chain is Large ribosomal subunit protein eL20, found in Caenorhabditis elegans.